The following is a 213-amino-acid chain: Thymidylate kinase (213 aa).

10-17 (GLEGAGKT) is a binding site for ATP.

The protein belongs to the thymidylate kinase family.

It catalyses the reaction dTMP + ATP = dTDP + ADP. Functionally, phosphorylation of dTMP to form dTDP in both de novo and salvage pathways of dTTP synthesis. This Shigella boydii serotype 18 (strain CDC 3083-94 / BS512) protein is Thymidylate kinase.